The following is a 650-amino-acid chain: Glycoprotein 105 (650 aa).

A helical; Signal-anchor for type II membrane protein transmembrane segment spans residues 1 to 32; sequence MATARLGVMRPPRSCALIFLCAFSMATAPTNA. Residues 33–650 are Virion surface-facing; it reads TAHRRAGTVK…RFPHVGIGSY (618 aa). N52, N290, N332, N338, N359, N422, N516, and N552 each carry an N-linked (GlcNAc...) asparagine; by host glycan.

As to quaternary structure, associates with the gp82-gp105 complex. Post-translationally, N-Glycosylated.

The protein localises to the virion membrane. The polypeptide is Glycoprotein 105 (U96/U97/U98/U99/U100) (Homo sapiens (Human)).